A 534-amino-acid chain; its full sequence is Arginine--tRNA ligase (534 aa).

Residues 120–130 (ANPTGFLHLGH) carry the 'HIGH' region motif.

The protein belongs to the class-I aminoacyl-tRNA synthetase family. Monomer.

Its subcellular location is the cytoplasm. It catalyses the reaction tRNA(Arg) + L-arginine + ATP = L-arginyl-tRNA(Arg) + AMP + diphosphate. This is Arginine--tRNA ligase from Mesomycoplasma hyopneumoniae (strain 7448) (Mycoplasma hyopneumoniae).